Here is a 139-residue protein sequence, read N- to C-terminus: Small ribosomal subunit protein uS12 (139 aa).

Disordered stretches follow at residues 1 to 22 (MPTI…SKSP) and 37 to 57 (KTPS…TPKK). Basic residues predominate over residues 9 to 19 (RKGRKSHKGKS). Asp102 bears the 3-methylthioaspartic acid mark.

The protein belongs to the universal ribosomal protein uS12 family. In terms of assembly, part of the 30S ribosomal subunit. Contacts proteins S8 and S17. May interact with IF1 in the 30S initiation complex.

Functionally, with S4 and S5 plays an important role in translational accuracy. Its function is as follows. Interacts with and stabilizes bases of the 16S rRNA that are involved in tRNA selection in the A site and with the mRNA backbone. Located at the interface of the 30S and 50S subunits, it traverses the body of the 30S subunit contacting proteins on the other side and probably holding the rRNA structure together. The combined cluster of proteins S8, S12 and S17 appears to hold together the shoulder and platform of the 30S subunit. This Limosilactobacillus reuteri (strain DSM 20016) (Lactobacillus reuteri) protein is Small ribosomal subunit protein uS12.